The following is a 20-amino-acid chain: Short cationic peptide-6a (20 aa).

Ser-20 is subject to Serine amide.

Expressed by the venom gland.

It is found in the secreted. The protein is Short cationic peptide-6a of Cupiennius salei (American wandering spider).